The primary structure comprises 1486 residues: Chromosome partition protein MukB (1486 aa).

34 to 41 (GGNGAGKS) is a binding site for ATP. Coiled coils occupy residues 326-418 (LEAD…QYNQ), 444-480 (LETF…QAYQ), and 509-603 (RHLA…RAPV). The tract at residues 666-783 (PGGSEDQRLN…EVPLFGRAAR (118 aa)) is flexible hinge. Coiled-coil stretches lie at residues 835–923 (EAEI…AKLE), 977–1115 (EMLS…TAKA), and 1209–1266 (VEAI…QNVS).

This sequence belongs to the SMC family. MukB subfamily. Homodimerization via its hinge domain. Binds to DNA via its C-terminal region. Interacts, and probably forms a ternary complex, with MukE and MukF via its C-terminal region. The complex formation is stimulated by calcium or magnesium. Interacts with tubulin-related protein FtsZ.

It localises to the cytoplasm. The protein resides in the nucleoid. Plays a central role in chromosome condensation, segregation and cell cycle progression. Functions as a homodimer, which is essential for chromosome partition. Involved in negative DNA supercoiling in vivo, and by this means organize and compact chromosomes. May achieve or facilitate chromosome segregation by condensation DNA from both sides of a centrally located replisome during cell division. This is Chromosome partition protein MukB from Escherichia coli O157:H7.